The chain runs to 425 residues: MNTLNDSLTAFDPDIAALIDGELRRQESGLEMIASENYAPLAVMQAQGSVLTNKYAEGYPGRRYYGGCEFVDGVEQLAIDRVKALFGAEYANVQPHSGATANAATMHALLNPGDTILGLSLAHGGHLTHGMRINFSGKLYHATAYEVSKEDYLVDMDAVAEAARTHRPKMIIAGWSAYPRQLDFARFRAIADEVDAVLMVDMAHFAGLVAAGVHPSPVPHAHVVTSTTHKTLGGPRGGIILCNDPAIAKKINSAVFPGQQGGPLEHVIAAKATAFKMAAQPEFAQRQQRCLDGARILAGRLTQPDVAERGIAVLTGGTDVHLVLVDLRDAELDGQQAEDRLAAVDITVNRNAVPFDPRPPMITSGLRIGTPALAARGFSHNDFRAVADLIAAALTATNDDQLGPLRAQVQRLAARYPLYPELHRT.

Residues Leu121 and 125–127 (GHL) contribute to the (6S)-5,6,7,8-tetrahydrofolate site. Lys230 is modified (N6-(pyridoxal phosphate)lysine).

This sequence belongs to the SHMT family. As to quaternary structure, homodimer. The cofactor is pyridoxal 5'-phosphate.

It localises to the cytoplasm. It carries out the reaction (6R)-5,10-methylene-5,6,7,8-tetrahydrofolate + glycine + H2O = (6S)-5,6,7,8-tetrahydrofolate + L-serine. It functions in the pathway one-carbon metabolism; tetrahydrofolate interconversion. The protein operates within amino-acid biosynthesis; glycine biosynthesis; glycine from L-serine: step 1/1. Functionally, catalyzes the reversible interconversion of serine and glycine with tetrahydrofolate (THF) serving as the one-carbon carrier. This reaction serves as the major source of one-carbon groups required for the biosynthesis of purines, thymidylate, methionine, and other important biomolecules. Also exhibits THF-independent aldolase activity toward beta-hydroxyamino acids, producing glycine and aldehydes, via a retro-aldol mechanism. The polypeptide is Serine hydroxymethyltransferase 2 (Mycobacterium tuberculosis (strain CDC 1551 / Oshkosh)).